Here is a 146-residue protein sequence, read N- to C-terminus: D-aminoacyl-tRNA deacylase (146 aa).

Positions 137–138 (GP) match the Gly-cisPro motif, important for rejection of L-amino acids motif.

It belongs to the DTD family. As to quaternary structure, homodimer.

The protein resides in the cytoplasm. The enzyme catalyses glycyl-tRNA(Ala) + H2O = tRNA(Ala) + glycine + H(+). It catalyses the reaction a D-aminoacyl-tRNA + H2O = a tRNA + a D-alpha-amino acid + H(+). In terms of biological role, an aminoacyl-tRNA editing enzyme that deacylates mischarged D-aminoacyl-tRNAs. Also deacylates mischarged glycyl-tRNA(Ala), protecting cells against glycine mischarging by AlaRS. Acts via tRNA-based rather than protein-based catalysis; rejects L-amino acids rather than detecting D-amino acids in the active site. By recycling D-aminoacyl-tRNA to D-amino acids and free tRNA molecules, this enzyme counteracts the toxicity associated with the formation of D-aminoacyl-tRNA entities in vivo and helps enforce protein L-homochirality. The polypeptide is D-aminoacyl-tRNA deacylase (Bacillus cytotoxicus (strain DSM 22905 / CIP 110041 / 391-98 / NVH 391-98)).